A 147-amino-acid polypeptide reads, in one-letter code: Small ribosomal subunit protein uS12 (147 aa).

Belongs to the universal ribosomal protein uS12 family. As to quaternary structure, part of the 30S ribosomal subunit.

Its function is as follows. With S4 and S5 plays an important role in translational accuracy. Located at the interface of the 30S and 50S subunits. In Pyrococcus abyssi (strain GE5 / Orsay), this protein is Small ribosomal subunit protein uS12.